Reading from the N-terminus, the 101-residue chain is Small ribosomal subunit protein uS14 (101 aa).

The protein belongs to the universal ribosomal protein uS14 family. Part of the 30S ribosomal subunit. Contacts proteins S3 and S10.

In terms of biological role, binds 16S rRNA, required for the assembly of 30S particles and may also be responsible for determining the conformation of the 16S rRNA at the A site. This is Small ribosomal subunit protein uS14 from Bartonella quintana (strain Toulouse) (Rochalimaea quintana).